The chain runs to 113 residues: Nucleoid-associated protein Syncc9902_0023 (113 aa).

This sequence belongs to the YbaB/EbfC family. Homodimer.

The protein resides in the cytoplasm. It localises to the nucleoid. In terms of biological role, binds to DNA and alters its conformation. May be involved in regulation of gene expression, nucleoid organization and DNA protection. The protein is Nucleoid-associated protein Syncc9902_0023 of Synechococcus sp. (strain CC9902).